Reading from the N-terminus, the 585-residue chain is Parathyroid hormone/parathyroid hormone-related peptide receptor (585 aa).

The N-terminal stretch at 1 to 26 is a signal peptide; the sequence is MGAPRISHSLALLLCCSVLSSVYALV. The Extracellular segment spans residues 27–185; sequence DADDVITKEE…REREVFDRLG (159 aa). 3 disulfide bridges follow: Cys48/Cys114, Cys105/Cys145, and Cys128/Cys167. A disordered region spans residues 69 to 90; the sequence is MSRSAKTKKEKPAEKLYSQAEE. Residues Asn148, Asn158, Asn163, and Asn173 are each glycosylated (N-linked (GlcNAc...) asparagine). Residues 186 to 209 traverse the membrane as a helical segment; it reads MIYTVGYSISLGSLTVAVLILGYF. Residues 210–216 are Cytoplasmic-facing; that stretch reads RRLHCTR. Residues 217-236 form a helical membrane-spanning segment; it reads NYIHMHLFVSFMLRAVSIFI. At 237 to 276 the chain is on the extracellular side; that stretch reads KDAVLYSGVSTDEIERITEEELRAFTEPPPADKAGFVGCR. The helical transmembrane segment at 277-300 threads the bilayer; that stretch reads VAVTVFLYFLTTNYYWILVEGLYL. The Cytoplasmic segment spans residues 301 to 314; that stretch reads HSLIFMAFFSEKKY. A helical membrane pass occupies residues 315 to 336; that stretch reads LWGFTLFGWGLPAVFVAVWVTV. Residues 337–355 are Extracellular-facing; the sequence is RATLANTECWDLSSGNKKW. A helical transmembrane segment spans residues 356–376; that stretch reads IIQVPILAAIVVNFILFINII. The Cytoplasmic portion of the chain corresponds to 377–403; it reads RVLATKLRETNAGRCDTRQQYRKLLKS. Residues 404-422 form a helical membrane-spanning segment; the sequence is TLVLMPLFGVHYIVFMATP. Residues 423–434 lie on the Extracellular side of the membrane; sequence YTEVSGILWQVQ. A helical membrane pass occupies residues 435 to 457; it reads MHYEMLFNSFQGFFVAIIYCFCN. Residues 458–585 lie on the Cytoplasmic side of the membrane; it reads GEVQAEIKKS…LLEEERETVM (128 aa). The Important for interaction with G proteins motif lies at 468–471; it reads WSRW. A disordered region spans residues 531–585; it reads PGYVKHGSISENSLPSSGPEPGTKDDGYLNGSGLYEPMVGEQPPPLLEEERETVM.

It belongs to the G-protein coupled receptor 2 family. In terms of assembly, homodimer in the absence of bound ligand. Peptide hormone binding leads to dissociation of the homodimer. In terms of processing, N-glycosylated.

Its subcellular location is the cell membrane. G-protein-coupled receptor for parathyroid hormone (PTH) and for parathyroid hormone-related peptide (PTHLH). Ligand binding causes a conformation change that triggers signaling via guanine nucleotide-binding proteins (G proteins) and modulates the activity of downstream effectors, such as adenylate cyclase (cAMP). PTH1R is coupled to G(s) G alpha proteins and mediates activation of adenylate cyclase activity. PTHLH dissociates from PTH1R more rapidly than PTH; as consequence, the cAMP response induced by PTHLH decays faster than the response induced by PTH. This chain is Parathyroid hormone/parathyroid hormone-related peptide receptor (PTH1R), found in Didelphis virginiana (North American opossum).